Consider the following 499-residue polypeptide: MCELYSKQDTLALRERHIGPSCKIFFAADPIKIMRAQGQYMFDEKGERYLDCINNVAHVGHCHPEVVKAAAKQMELLNTNSRFLHDNIIEFAKRLTATLPQELSVCYFTNSGSEANDLALRLARQFRGHQDVITLDHAYHGHLSSLIEISPYKFQKGKDVKRETVHVAPAPDTYRGKYREDHEDPSTAYADEVKKIIEEAHSSGRKIAAFIAESMQSCGGQIIPPAGYFQKVAEHIHKAGGVFIADEVQVGFGRVGRYFWSFQMYGEDFVPDIVTMGKPMGNGHPISCVVTTKEIAEAFSSSGMEYFNTYGGNPVSCAVGLAVLDVIEKENLQGNAVRVGTYLMELLSEQKAKHPLIGDIRGVGLFIGIDLVKDREKRTPATAEAQHIIYEMKGKGVLLSADGPHRNVLKIKPPMCFTEDDAKFLVDHLDGILTVLEEAMDSKSGTVFSENTAYRTKMPKEIQVELPNLSATEAREIPRGKRNGVCSDQQALLSKRLKT.

N6-(pyridoxal phosphate)lysine is present on Lys-278.

Belongs to the class-III pyridoxal-phosphate-dependent aminotransferase family. In terms of assembly, homotetramer. It depends on pyridoxal 5'-phosphate as a cofactor.

It is found in the mitochondrion. The catalysed reaction is phosphoethanolamine + H2O = acetaldehyde + NH4(+) + phosphate. In terms of biological role, catalyzes the pyridoxal-phosphate-dependent breakdown of phosphoethanolamine, converting it to ammonia, inorganic phosphate and acetaldehyde. This chain is Ethanolamine-phosphate phospho-lyase (Etnppl), found in Mus musculus (Mouse).